Reading from the N-terminus, the 240-residue chain is Homeobox protein notochord (240 aa).

Over residues 1 to 13 the composition is skewed to polar residues; that stretch reads MSSPAPSGTQVQP. 2 disordered regions span residues 1 to 21 and 208 to 240; these read MSSPAPSGTQVQPGSLRPCPG and QKLKLPSSSVMEEPSSSSDGNIQSEDAELGIGS. A DNA-binding region (homeobox) is located at residues 149-208; the sequence is TKRVRTTFNLQQLQELEKVFAKQHNLVGKERAQLAARLHLTENQVRIWFQNRRVKYQKQQ. Low complexity predominate over residues 213–225; sequence PSSSVMEEPSSSS.

It localises to the nucleus. In terms of biological role, transcription factor that controls node morphogenesis. Acts downstream of both FOXA2 and Brachyury (T) during notochord development. Is essential for cilia formation in the posterior notochord (PNC) and for left-right patterning; acts upstream of FOXJ1 and RFX3 in this process and is required for the expression of various components important for axonemal assembly and function. Plays a role in regulating axial versus paraxial cell fate. Activates the transcription of ciliary proteins C11orf97 homolog, FAM183B and SPACA9 in the embryonic ventral node. This Mus musculus (Mouse) protein is Homeobox protein notochord (Noto).